The chain runs to 644 residues: DNA mismatch repair protein MutL (644 aa).

2 disordered regions span residues 353–399 (SESG…SQLT) and 420–440 (GSMAVPRESRSGPTGESRARA). Polar residues predominate over residues 370–381 (SPESKTHSTWNE). A compositionally biased stretch (basic and acidic residues) spans 383-399 (SRVDTSRVEISRDSQLT).

It belongs to the DNA mismatch repair MutL/HexB family.

In terms of biological role, this protein is involved in the repair of mismatches in DNA. It is required for dam-dependent methyl-directed DNA mismatch repair. May act as a 'molecular matchmaker', a protein that promotes the formation of a stable complex between two or more DNA-binding proteins in an ATP-dependent manner without itself being part of a final effector complex. This chain is DNA mismatch repair protein MutL, found in Shewanella sp. (strain MR-4).